A 359-amino-acid chain; its full sequence is S-adenosylmethionine:tRNA ribosyltransferase-isomerase (359 aa).

It belongs to the QueA family. As to quaternary structure, monomer.

The protein localises to the cytoplasm. The enzyme catalyses 7-aminomethyl-7-carbaguanosine(34) in tRNA + S-adenosyl-L-methionine = epoxyqueuosine(34) in tRNA + adenine + L-methionine + 2 H(+). The protein operates within tRNA modification; tRNA-queuosine biosynthesis. Functionally, transfers and isomerizes the ribose moiety from AdoMet to the 7-aminomethyl group of 7-deazaguanine (preQ1-tRNA) to give epoxyqueuosine (oQ-tRNA). In Synechococcus elongatus (strain ATCC 33912 / PCC 7942 / FACHB-805) (Anacystis nidulans R2), this protein is S-adenosylmethionine:tRNA ribosyltransferase-isomerase.